A 91-amino-acid chain; its full sequence is MVCYLYWETFPSISHLLKITLSARDCHVCGLNLFIFMDPVENQALHPVIMALILMPSLHCFGNILILLFLKSPAQLFCRMSVDLALLFPHK.

Residues 49 to 69 form a helical membrane-spanning segment; that stretch reads IMALILMPSLHCFGNILILLF.

Its subcellular location is the membrane. The polypeptide is Putative transmembrane protein encoded by LINC00862 (LINC00862) (Homo sapiens (Human)).